Consider the following 194-residue polypeptide: Outer-membrane lipoprotein LolB (194 aa).

Positions 1–18 (MKLLQHLTLIFCLLILTA) are cleaved as a signal peptide. Residue Cys19 is the site of N-palmitoyl cysteine attachment. Residue Cys19 is the site of S-diacylglycerol cysteine attachment.

Belongs to the LolB family. Monomer.

Its subcellular location is the cell outer membrane. Functionally, plays a critical role in the incorporation of lipoproteins in the outer membrane after they are released by the LolA protein. This chain is Outer-membrane lipoprotein LolB, found in Tolumonas auensis (strain DSM 9187 / NBRC 110442 / TA 4).